The following is a 44-amino-acid chain: Protein PsbN (44 aa).

Residues 6–26 (FFFTIFLWCLLLSITGYSIYV) traverse the membrane as a helical segment.

This sequence belongs to the PsbN family.

The protein resides in the plastid. The protein localises to the chloroplast thylakoid membrane. Functionally, may play a role in photosystem I and II biogenesis. The polypeptide is Protein PsbN (Chlorella vulgaris (Green alga)).